Reading from the N-terminus, the 87-residue chain is MEKIFKVTSDSGIHARPATLLVNTASKFGSDINLEYNGKNVNLKSIMGVMSLGIQQNAEIKITANGDDAAQALAAIEETMKNEGLGE.

Residues 1–87 (MEKIFKVTSD…ETMKNEGLGE (87 aa)) form the HPr domain. Catalysis depends on His14, which acts as the Pros-phosphohistidine intermediate; alternate. His14 carries the post-translational modification Tele-phosphohistidine; alternate. Ser45 bears the Phosphoserine; by HPrK/P mark.

This sequence belongs to the HPr family. In terms of processing, the form phosphorylated at the tele nitrogen (N(epsilon)2), instead of the expected pros nitrogen (N(delta)1), of His-14 is not able to transfer its phosphoryl group to the B.subtilis EIIA-Glc domain. This form may be inactive in PTS-catalyzed sugar transport or target an as yet unknown acceptor molecule in an alternative metabolic process.

Its subcellular location is the cytoplasm. Phosphorylation on Ser-45 inhibits the phosphoryl transfer from enzyme I to HPr. In terms of biological role, general (non sugar-specific) component of the phosphoenolpyruvate-dependent sugar phosphotransferase system (sugar PTS). This major carbohydrate active-transport system catalyzes the phosphorylation of incoming sugar substrates concomitantly with their translocation across the cell membrane. The phosphoryl group from phosphoenolpyruvate (PEP) is transferred to the phosphoryl carrier protein HPr by enzyme I. Phospho-HPr then transfers it to the PTS EIIA domain. P-Ser-HPr interacts with the catabolite control protein A (CcpA), forming a complex that binds to DNA at the catabolite response elements cre, operator sites preceding a large number of catabolite-regulated genes. Thus, P-Ser-HPr is a corepressor in carbon catabolite repression (CCR), a mechanism that allows bacteria to coordinate and optimize the utilization of available carbon sources. P-Ser-HPr mediates glucose catabolite repression of cry4A toxin expression. The polypeptide is Phosphocarrier protein HPr (ptsH) (Bacillus thuringiensis subsp. israelensis).